The following is a 399-amino-acid chain: Glycosyltransferase BC10 (399 aa).

Residues 1–17 lie on the Cytoplasmic side of the membrane; that stretch reads MKPPRRWMYGRGGGKGK. A helical; Signal-anchor for type II membrane protein membrane pass occupies residues 18–38; it reads PAGLLLLGVFLCLSVVLLLLL. At 39–399 the chain is on the lumenal side; it reads HGSSPSLEGE…LIAANGASTM (361 aa). Asn-142 and Asn-188 each carry an N-linked (GlcNAc...) asparagine glycan.

The protein belongs to the glycosyltransferase 14 family. Expressed in roots, culms, leaves and panicles. Expressed in vascular bundles of leaf sheaths and stems where sclerenchyma cells are developing. Expressed in mechanical tissues of young organs, such as young leaf sheaths, stems and tiller buds.

It is found in the membrane. Its function is as follows. Glycosyltransferase required for the regulation of cellulose biosynthesis in the cell wall. Required for the biosynthesis of hexoses (glucose, mannose and galactose) in both cellulosic and non-cellulosic (pectins and hemicelluloses) components of cell walls. Required for the formation of arabinogalactan proteins which contribute to the strengthening of cell walls. Possesses low glycosyltransferase activity. The polypeptide is Glycosyltransferase BC10 (Oryza sativa subsp. japonica (Rice)).